Consider the following 361-residue polypeptide: tRNA-specific 2-thiouridylase MnmA (361 aa).

Residues 6–13 (LVSGGVDS) and Ile32 each bind ATP. The segment at 93 to 95 (NPD) is interaction with target base in tRNA. Cys98 functions as the Nucleophile in the catalytic mechanism. Cysteines 98 and 193 form a disulfide. Position 121 (Gly121) interacts with ATP. The tract at residues 143 to 145 (KDQ) is interaction with tRNA. Cys193 (cysteine persulfide intermediate) is an active-site residue.

Belongs to the MnmA/TRMU family.

The protein localises to the cytoplasm. The enzyme catalyses S-sulfanyl-L-cysteinyl-[protein] + uridine(34) in tRNA + AH2 + ATP = 2-thiouridine(34) in tRNA + L-cysteinyl-[protein] + A + AMP + diphosphate + H(+). Functionally, catalyzes the 2-thiolation of uridine at the wobble position (U34) of tRNA, leading to the formation of s(2)U34. This chain is tRNA-specific 2-thiouridylase MnmA, found in Porphyromonas gingivalis (strain ATCC BAA-308 / W83).